The primary structure comprises 526 residues: Peptide chain release factor 3 (526 aa).

One can recognise a tr-type G domain in the interval 8–277; sequence GKRRTFAIIS…GLTEWAPAPQ (270 aa). Residues 17–24, 85–89, and 139–142 contribute to the GTP site; these read SHPDAGKT, DTPGH, and NKMD.

The protein belongs to the TRAFAC class translation factor GTPase superfamily. Classic translation factor GTPase family. PrfC subfamily.

The protein localises to the cytoplasm. In terms of biological role, increases the formation of ribosomal termination complexes and stimulates activities of RF-1 and RF-2. It binds guanine nucleotides and has strong preference for UGA stop codons. It may interact directly with the ribosome. The stimulation of RF-1 and RF-2 is significantly reduced by GTP and GDP, but not by GMP. The chain is Peptide chain release factor 3 from Aliivibrio salmonicida (strain LFI1238) (Vibrio salmonicida (strain LFI1238)).